A 352-amino-acid chain; its full sequence is N-lysine methyltransferase KMT5A (352 aa).

The segment at 21–51 (AVAATAPGPEMVERRGPGRPRTNGENVFTGQ) is disordered. At S59 the chain carries Phosphoserine. Residues 87–202 (PLAGIYRKRD…KSKAELQSEE (116 aa)) form a disordered region. Positions 109–121 (MKAEEQKIKDARR) are enriched in basic and acidic residues. Position 140 is a phosphothreonine (T140). Over residues 156–172 (GLKKPVRGKQAPRKKAQ) the composition is skewed to basic residues. Residues 216–337 (EGMKIDLIDG…AGEELLYDYG (122 aa)) enclose the SET domain. Residues 226–228 (KGR), Y271, and 298–299 (NH) each bind S-adenosyl-L-methionine.

This sequence belongs to the class V-like SAM-binding methyltransferase superfamily. Histone-lysine methyltransferase family. PR/SET subfamily. In terms of assembly, interacts with L3MBTL1. Interacts with SIRT2 (phosphorylated form); the interaction is direct, stimulates KMT5A-mediated methyltransferase activity at histone H4 'Lys-20' (H4K20me1) and is increased in a H(2)O(2)-induced oxidative stress-dependent manner. In terms of processing, ubiquitinated and degraded by the DCX(DTL) complex.

It is found in the nucleus. The protein localises to the chromosome. It catalyses the reaction L-lysyl(20)-[histone H4] + S-adenosyl-L-methionine = N(6)-methyl-L-lysyl(20)-[histone H4] + S-adenosyl-L-homocysteine + H(+). It carries out the reaction L-lysyl-[protein] + S-adenosyl-L-methionine = N(6)-methyl-L-lysyl-[protein] + S-adenosyl-L-homocysteine + H(+). Functionally, protein-lysine N-methyltransferase that monomethylates both histones and non-histone proteins. Specifically monomethylates 'Lys-20' of histone H4 (H4K20me1). H4K20me1 is enriched during mitosis and represents a specific tag for epigenetic transcriptional repression. Mainly functions in euchromatin regions, thereby playing a central role in the silencing of euchromatic genes. Required for cell proliferation, probably by contributing to the maintenance of proper higher-order structure of DNA during mitosis. Involved in chromosome condensation and proper cytokinesis. Nucleosomes are preferred as substrate compared to free histones. Mediates monomethylation of p53/TP53 at 'Lys-382', leading to repress p53/TP53-target genes. Plays a negative role in TGF-beta response regulation and a positive role in cell migration. This chain is N-lysine methyltransferase KMT5A, found in Bos taurus (Bovine).